The following is a 354-amino-acid chain: Fructose-bisphosphate aldolase 2 (354 aa).

D-glyceraldehyde 3-phosphate is bound at residue S50. D83 functions as the Proton donor in the catalytic mechanism. H84, D105, E142, and H198 together coordinate Zn(2+). G199 contacts dihydroxyacetone phosphate. Residue H232 participates in Zn(2+) binding. Residues 233 to 235 and 275 to 278 each bind dihydroxyacetone phosphate; these read GSS and NIDT.

Belongs to the class II fructose-bisphosphate aldolase family. Homodimer. The cofactor is Zn(2+).

The enzyme catalyses beta-D-fructose 1,6-bisphosphate = D-glyceraldehyde 3-phosphate + dihydroxyacetone phosphate. The protein operates within carbohydrate biosynthesis; Calvin cycle. Its pathway is carbohydrate degradation; glycolysis; D-glyceraldehyde 3-phosphate and glycerone phosphate from D-glucose: step 4/4. In terms of biological role, catalyzes the aldol condensation of dihydroxyacetone phosphate (DHAP or glycerone-phosphate) with glyceraldehyde 3-phosphate (G3P) to form fructose 1,6-bisphosphate (FBP) in gluconeogenesis and the reverse reaction in glycolysis. The protein is Fructose-bisphosphate aldolase 2 (cfxB) of Cereibacter sphaeroides (Rhodobacter sphaeroides).